The following is a 500-amino-acid chain: Probable cytosol aminopeptidase (500 aa).

Residues lysine 265 and aspartate 270 each coordinate Mn(2+). Lysine 277 is a catalytic residue. 3 residues coordinate Mn(2+): aspartate 288, aspartate 347, and glutamate 349. Residue arginine 351 is part of the active site.

Belongs to the peptidase M17 family. Mn(2+) is required as a cofactor.

Its subcellular location is the cytoplasm. It catalyses the reaction Release of an N-terminal amino acid, Xaa-|-Yaa-, in which Xaa is preferably Leu, but may be other amino acids including Pro although not Arg or Lys, and Yaa may be Pro. Amino acid amides and methyl esters are also readily hydrolyzed, but rates on arylamides are exceedingly low.. The catalysed reaction is Release of an N-terminal amino acid, preferentially leucine, but not glutamic or aspartic acids.. Functionally, presumably involved in the processing and regular turnover of intracellular proteins. Catalyzes the removal of unsubstituted N-terminal amino acids from various peptides. This is Probable cytosol aminopeptidase from Rickettsia africae (strain ESF-5).